The following is a 266-amino-acid chain: Large ribosomal subunit protein eL8 (266 aa).

Glycyl lysine isopeptide (Lys-Gly) (interchain with G-Cter in SUMO2) cross-links involve residues Lys-11, Lys-20, and Lys-21. Residue Lys-34 is modified to N6-acetyllysine. A Glycyl lysine isopeptide (Lys-Gly) (interchain with G-Cter in SUMO2) cross-link involves residue Lys-48. Lys-97 is modified (N6-acetyllysine; alternate). A Glycyl lysine isopeptide (Lys-Gly) (interchain with G-Cter in SUMO2); alternate cross-link involves residue Lys-97. A Glycyl lysine isopeptide (Lys-Gly) (interchain with G-Cter in SUMO2) cross-link involves residue Lys-125. N6-acetyllysine is present on Lys-217. Lys-245 is covalently cross-linked (Glycyl lysine isopeptide (Lys-Gly) (interchain with G-Cter in SUMO2)).

It belongs to the eukaryotic ribosomal protein eL8 family. In terms of assembly, component of the large ribosomal subunit. Interacts with CRY1. Interacts with DICER1, AGO2, TARBP2, MOV10 and EIF6; they form a large RNA-induced silencing complex (RISC).

The protein localises to the cytoplasm. In terms of biological role, component of the large ribosomal subunit. The ribosome is a large ribonucleoprotein complex responsible for the synthesis of proteins in the cell. In Bos taurus (Bovine), this protein is Large ribosomal subunit protein eL8 (RPL7A).